The following is a 127-amino-acid chain: Small ribosomal subunit protein uS17m (127 aa).

It belongs to the universal ribosomal protein uS17 family.

Its subcellular location is the mitochondrion. In Dictyostelium discoideum (Social amoeba), this protein is Small ribosomal subunit protein uS17m (mrps17).